Here is a 490-residue protein sequence, read N- to C-terminus: Hydroxysteroid dehydrogenase-like protein 2 (490 aa).

NADP(+)-binding positions include Gly17 to Gly23, Lys42, and Asp74. Lys42 bears the N6-(2-hydroxyisobutyryl)lysine mark. Lys116 carries the N6-acetyllysine modification. Residue Tyr168 is the Proton acceptor of the active site. Lys172 contributes to the NADP(+) binding site. A compositionally biased stretch (basic and acidic residues) spans Met282–Leu301. Residues Met282–Gln370 form a disordered region. Residues Gln302–Pro367 show a composition bias toward low complexity. Positions Gly380–Asn487 constitute an SCP2 domain. Lys390 carries the post-translational modification N6-succinyllysine.

Belongs to the short-chain dehydrogenases/reductases (SDR) family. As to expression, widely expressed.

It localises to the peroxisome. It is found in the mitochondrion. In terms of biological role, has apparently no steroid dehydrogenase activity. Controls bile acid (BA) and lipid metabolism in response to nutritional cues. This Mus musculus (Mouse) protein is Hydroxysteroid dehydrogenase-like protein 2 (Hsdl2).